Reading from the N-terminus, the 258-residue chain is MVLIRVLANLLILQLSYAQKSSELVVGGDECNINEHRSLVAIFNSTEFFCSGTLINQEWVVTAAHCDSTNFKMKLGVHSKKVPNEDEQTRNPKEKFFCPNKKKDDVLDKDIMLIKLDSPVSNSEHIAPLSLPSSPPSVGSVCHIMGWGSITPIEKTLPDVPYCANINLLDDAVCRPPYPELPATSRTLCAGILEGGKDTCVVDSGGPLICNGQFQGIVFYGAHPCGQALKPGVYTKVFDYNDWIQSIIAGNTAATCPP.

Positions 1–18 (MVLIRVLANLLILQLSYA) are cleaved as a signal peptide. The propeptide occupies 19-24 (QKSSEL). A Peptidase S1 domain is found at 25–249 (VVGGDECNIN…YNDWIQSIIA (225 aa)). Cystine bridges form between Cys31–Cys163, Cys50–Cys66, Cys98–Cys256, Cys142–Cys210, Cys174–Cys189, and Cys200–Cys225. An N-linked (GlcNAc...) asparagine glycan is attached at Asn44. Catalysis depends on charge relay system residues His65 and Asp110. Residue Ser204 is the Charge relay system of the active site.

Belongs to the peptidase S1 family. Snake venom subfamily. Monomer. In terms of tissue distribution, expressed by the venom gland.

It is found in the secreted. In terms of biological role, snake venom serine protease that may act in the hemostasis system of the prey. In Crotalus adamanteus (Eastern diamondback rattlesnake), this protein is Snake venom serine proteinase 5.